The following is a 296-amino-acid chain: Thioredoxin-related transmembrane protein 2 (296 aa).

An N-terminal signal peptide occupies residues 1–48 (MAVLAPLIALVYSVPRLSRWLARPYYFLSALLSAAFLLVRKLPPVCES). At 49-102 (LPTQREDGNPCDFDWREVEILMFLSAIVMMKNRRSITVEQHVGNIFMFSKVANA) the chain is on the extracellular side. Residues 103–125 (ILFFRLDIRMGLLYITLCIVFLM) traverse the membrane as a helical segment. The Cytoplasmic segment spans residues 126 to 296 (TCKPPLYMGP…VPDEESKKDK (171 aa)). Residues 132-269 (YMGPEYIKYF…LYQRAKKLSK (138 aa)) enclose the Thioredoxin domain. Residues Ser-211 and Ser-243 each carry the phosphoserine modification. The segment at 272-296 (DKIPEEQPVAAVPAAVPDEESKKDK) is disordered. Positions 277–287 (EQPVAAVPAAV) are enriched in low complexity. The Di-lysine motif motif lies at 293–296 (KKDK).

As to quaternary structure, monomer. Homodimer; disulfide-linked. Occurs in both reduced and oxidized monomeric form. Oxidative conditions increase homodimerization. Interacts with CANX. Interacts with ATP2A2.

It localises to the endoplasmic reticulum membrane. It is found in the mitochondrion membrane. Endoplasmic reticulum and mitochondria-associated protein that probably functions as a regulator of cellular redox state and thereby regulates protein post-translational modification, protein folding and mitochondrial activity. Indirectly regulates neuronal proliferation, migration, and organization in the developing brain. This chain is Thioredoxin-related transmembrane protein 2 (TMX2), found in Bos taurus (Bovine).